Here is a 366-residue protein sequence, read N- to C-terminus: Anthranilate phosphoribosyltransferase (366 aa).

5-phospho-alpha-D-ribose 1-diphosphate-binding positions include G79, 82–83 (GD), T87, 89–92 (NIST), 107–115 (KHGNRAATS), and S119. An anthranilate-binding site is contributed by G79. Position 91 (S91) interacts with Mg(2+). N110 contributes to the anthranilate binding site. R165 serves as a coordination point for anthranilate. Residues D223 and E224 each contribute to the Mg(2+) site. The interval 342 to 366 (ESLSGKSMSMRSRTSILSPASGERV) is disordered. Over residues 345 to 359 (SGKSMSMRSRTSILS) the composition is skewed to polar residues.

The protein belongs to the anthranilate phosphoribosyltransferase family. As to quaternary structure, homodimer. Mg(2+) serves as cofactor.

It carries out the reaction N-(5-phospho-beta-D-ribosyl)anthranilate + diphosphate = 5-phospho-alpha-D-ribose 1-diphosphate + anthranilate. Its pathway is amino-acid biosynthesis; L-tryptophan biosynthesis; L-tryptophan from chorismate: step 2/5. Its function is as follows. Catalyzes the transfer of the phosphoribosyl group of 5-phosphorylribose-1-pyrophosphate (PRPP) to anthranilate to yield N-(5'-phosphoribosyl)-anthranilate (PRA). The sequence is that of Anthranilate phosphoribosyltransferase from Methanosarcina barkeri (strain Fusaro / DSM 804).